The primary structure comprises 210 residues: Probable GTP-binding protein EngB (210 aa).

The EngB-type G domain occupies 30 to 204 (QGYEVAFAGR…YRVLADWMEL (175 aa)). GTP-binding positions include 38-45 (GRSNAGKS), 64-68 (GRTQL), 82-85 (DLPG), 149-152 (TKAD), and 182-185 (LFSA). Residues S45 and T66 each coordinate Mg(2+).

The protein belongs to the TRAFAC class TrmE-Era-EngA-EngB-Septin-like GTPase superfamily. EngB GTPase family. Requires Mg(2+) as cofactor.

Functionally, necessary for normal cell division and for the maintenance of normal septation. The protein is Probable GTP-binding protein EngB of Pseudomonas putida (strain ATCC 700007 / DSM 6899 / JCM 31910 / BCRC 17059 / LMG 24140 / F1).